Reading from the N-terminus, the 249-residue chain is Hydroxyacylglutathione hydrolase (249 aa).

Residues H54, H56, D58, H59, H113, D138, and H176 each coordinate Zn(2+).

It belongs to the metallo-beta-lactamase superfamily. Glyoxalase II family. In terms of assembly, monomer. It depends on Zn(2+) as a cofactor.

The catalysed reaction is an S-(2-hydroxyacyl)glutathione + H2O = a 2-hydroxy carboxylate + glutathione + H(+). It functions in the pathway secondary metabolite metabolism; methylglyoxal degradation; (R)-lactate from methylglyoxal: step 2/2. In terms of biological role, thiolesterase that catalyzes the hydrolysis of S-D-lactoyl-glutathione to form glutathione and D-lactic acid. The polypeptide is Hydroxyacylglutathione hydrolase (Parasynechococcus marenigrum (strain WH8102)).